A 374-amino-acid polypeptide reads, in one-letter code: tRNA-specific 2-thiouridylase MnmA (374 aa).

Residues 12 to 19 (GMSGGVDS) and M38 each bind ATP. Positions 98 to 100 (NPD) are interaction with target base in tRNA. The Nucleophile role is filled by C103. C103 and C200 are disulfide-bonded. G127 provides a ligand contact to ATP. Residues 150 to 152 (KDQ) are interaction with tRNA. C200 (cysteine persulfide intermediate) is an active-site residue. Positions 311–312 (RY) are interaction with tRNA.

The protein belongs to the MnmA/TRMU family.

It localises to the cytoplasm. The enzyme catalyses S-sulfanyl-L-cysteinyl-[protein] + uridine(34) in tRNA + AH2 + ATP = 2-thiouridine(34) in tRNA + L-cysteinyl-[protein] + A + AMP + diphosphate + H(+). Its function is as follows. Catalyzes the 2-thiolation of uridine at the wobble position (U34) of tRNA, leading to the formation of s(2)U34. The sequence is that of tRNA-specific 2-thiouridylase MnmA from Lactiplantibacillus plantarum (strain ATCC BAA-793 / NCIMB 8826 / WCFS1) (Lactobacillus plantarum).